The primary structure comprises 744 residues: Scytalone dehydratase-like protein Arp1 (744 aa).

Residue Tyr-621 participates in substrate binding. Residues His-656 and His-681 contribute to the active site. Asn-702 is a binding site for substrate.

The protein belongs to the scytalone dehydratase family. As to quaternary structure, homotrimer. Each subunit contains an active site, located in the central part of the hydrophobic core of the monomer, which functions independently.

In terms of biological role, scytalone dehydratase-like protein; part of the Pks2 gene cluster that mediates the formation of infectious structures (appressoria), enabling these fungi to kill insects faster. The product of the Pks2 gene cluster is different from the one of Pks1 and has still not been identified. The polypeptide is Scytalone dehydratase-like protein Arp1 (Metarhizium brunneum (strain ARSEF 3297)).